The sequence spans 387 residues: 3-ketoacyl-CoA thiolase (387 aa).

Cys-91 acts as the Acyl-thioester intermediate in catalysis. Catalysis depends on proton acceptor residues His-343 and Cys-373.

The protein belongs to the thiolase-like superfamily. Thiolase family. As to quaternary structure, heterotetramer of two alpha chains (FadB) and two beta chains (FadA).

It localises to the cytoplasm. It catalyses the reaction an acyl-CoA + acetyl-CoA = a 3-oxoacyl-CoA + CoA. Its pathway is lipid metabolism; fatty acid beta-oxidation. Functionally, catalyzes the final step of fatty acid oxidation in which acetyl-CoA is released and the CoA ester of a fatty acid two carbons shorter is formed. This is 3-ketoacyl-CoA thiolase from Escherichia coli O1:K1 / APEC.